The sequence spans 73 residues: UPF0435 protein OB1527 (73 aa).

This sequence belongs to the UPF0435 family.

This is UPF0435 protein OB1527 from Oceanobacillus iheyensis (strain DSM 14371 / CIP 107618 / JCM 11309 / KCTC 3954 / HTE831).